Reading from the N-terminus, the 96-residue chain is Putative pterin-4-alpha-carbinolamine dehydratase (96 aa).

This sequence belongs to the pterin-4-alpha-carbinolamine dehydratase family.

It catalyses the reaction (4aS,6R)-4a-hydroxy-L-erythro-5,6,7,8-tetrahydrobiopterin = (6R)-L-erythro-6,7-dihydrobiopterin + H2O. This is Putative pterin-4-alpha-carbinolamine dehydratase from Prochlorococcus marinus (strain MIT 9515).